Here is a 208-residue protein sequence, read N- to C-terminus: Interleukin-6 (208 aa).

A signal peptide spans 1-29 (MNSRFTSAFTPFAVSLGLLLVMTSAFPTP). Asparagine 38 carries an N-linked (GlcNAc...) asparagine glycan. A disulfide bond links cysteine 72 and cysteine 78. Phosphoserine is present on serine 81. Cysteine 101 and cysteine 111 form a disulfide bridge.

The protein belongs to the IL-6 superfamily. Component of a hexamer of two molecules each of IL6, IL6R and IL6ST; first binds to IL6R to associate with the signaling subunit IL6ST. Interacts with IL6R (via the N-terminal ectodomain); this interaction may be affected by IL6R-binding with SORL1, hence decreasing IL6 cis signaling. Interacts with SORL1 (via the N-terminal ectodomain); this interaction leads to IL6 internalization and lysosomal degradation. May form a trimeric complex with the soluble SORL1 ectodomain and soluble IL6R receptor; this interaction might stabilize circulating IL6, hence promoting IL6 trans signaling.

Its subcellular location is the secreted. Functionally, cytokine with a wide variety of biological functions in immunity, tissue regeneration, and metabolism. Binds to IL6R, then the complex associates to the signaling subunit IL6ST/gp130 to trigger the intracellular IL6-signaling pathway. The interaction with the membrane-bound IL6R and IL6ST stimulates 'classic signaling', whereas the binding of IL6 and soluble IL6R to IL6ST stimulates 'trans-signaling'. Alternatively, 'cluster signaling' occurs when membrane-bound IL6:IL6R complexes on transmitter cells activate IL6ST receptors on neighboring receiver cells. Its function is as follows. IL6 is a potent inducer of the acute phase response. Rapid production of IL6 contributes to host defense during infection and tissue injury, but excessive IL6 synthesis is involved in disease pathology. In the innate immune response, is synthesized by myeloid cells, such as macrophages and dendritic cells, upon recognition of pathogens through toll-like receptors (TLRs) at the site of infection or tissue injury. In the adaptive immune response, is required for the differentiation of B cells into immunoglobulin-secreting cells. Plays a major role in the differentiation of CD4(+) T cell subsets. Essential factor for the development of T follicular helper (Tfh) cells that are required for the induction of germinal-center formation. Required to drive naive CD4(+) T cells to the Th17 lineage. Also required for proliferation of myeloma cells and the survival of plasmablast cells. Acts as an essential factor in bone homeostasis and on vessels directly or indirectly by induction of VEGF, resulting in increased angiogenesis activity and vascular permeability. Induces, through 'trans-signaling' and synergistically with IL1B and TNF, the production of VEGF. Involved in metabolic controls, is discharged into the bloodstream after muscle contraction increasing lipolysis and improving insulin resistance. 'Trans-signaling' in central nervous system also regulates energy and glucose homeostasis. Mediates, through GLP-1, crosstalk between insulin-sensitive tissues, intestinal L cells and pancreatic islets to adapt to changes in insulin demand. Also acts as a myokine. Plays a protective role during liver injury, being required for maintenance of tissue regeneration. Also has a pivotal role in iron metabolism by regulating HAMP/hepcidin expression upon inflammation or bacterial infection. Through activation of IL6ST-YAP-NOTCH pathway, induces inflammation-induced epithelial regeneration. This chain is Interleukin-6 (IL6), found in Bubalus bubalis (Domestic water buffalo).